Here is a 201-residue protein sequence, read N- to C-terminus: Protein TraJ (201 aa).

It localises to the cytoplasm. In terms of biological role, this protein is essential for positively regulating the expression of transfer genes that are involved in the conjugal transfer of DNA between bacterial cells. The polypeptide is Protein TraJ (traJ) (Escherichia coli).